Reading from the N-terminus, the 403-residue chain is NADH-quinone oxidoreductase subunit D (403 aa).

Belongs to the complex I 49 kDa subunit family. As to quaternary structure, NDH-1 is composed of 14 different subunits. Subunits NuoB, C, D, E, F, and G constitute the peripheral sector of the complex.

It is found in the cell inner membrane. It catalyses the reaction a quinone + NADH + 5 H(+)(in) = a quinol + NAD(+) + 4 H(+)(out). Its function is as follows. NDH-1 shuttles electrons from NADH, via FMN and iron-sulfur (Fe-S) centers, to quinones in the respiratory chain. The immediate electron acceptor for the enzyme in this species is believed to be ubiquinone. Couples the redox reaction to proton translocation (for every two electrons transferred, four hydrogen ions are translocated across the cytoplasmic membrane), and thus conserves the redox energy in a proton gradient. This Ruegeria sp. (strain TM1040) (Silicibacter sp.) protein is NADH-quinone oxidoreductase subunit D.